We begin with the raw amino-acid sequence, 598 residues long: Elongation factor 4 (598 aa).

Positions 2 to 184 constitute a tr-type G domain; it reads KNIRNFSIIA…EIVAKIPAPE (183 aa). Residues 14–19 and 131–134 each bind GTP; these read DHGKST and NKID.

It belongs to the TRAFAC class translation factor GTPase superfamily. Classic translation factor GTPase family. LepA subfamily.

The protein localises to the cell inner membrane. It carries out the reaction GTP + H2O = GDP + phosphate + H(+). Its function is as follows. Required for accurate and efficient protein synthesis under certain stress conditions. May act as a fidelity factor of the translation reaction, by catalyzing a one-codon backward translocation of tRNAs on improperly translocated ribosomes. Back-translocation proceeds from a post-translocation (POST) complex to a pre-translocation (PRE) complex, thus giving elongation factor G a second chance to translocate the tRNAs correctly. Binds to ribosomes in a GTP-dependent manner. This chain is Elongation factor 4, found in Haemophilus influenzae (strain ATCC 51907 / DSM 11121 / KW20 / Rd).